We begin with the raw amino-acid sequence, 90 residues long: Probable Fe(2+)-trafficking protein (90 aa).

The protein belongs to the Fe(2+)-trafficking protein family.

Functionally, could be a mediator in iron transactions between iron acquisition and iron-requiring processes, such as synthesis and/or repair of Fe-S clusters in biosynthetic enzymes. This chain is Probable Fe(2+)-trafficking protein, found in Vibrio atlanticus (strain LGP32) (Vibrio splendidus (strain Mel32)).